A 360-amino-acid chain; its full sequence is F420-dependent hydroxymycolic acid dehydrogenase (360 aa).

The tat-type signal signal peptide spans 1–40; the sequence is MTGISRRTFGLAAGFGAIGAGGLGGGCSTRSGPTPTPEPA. Asp-77 serves as a coordination point for coenzyme F420-(gamma-Glu)n. Catalysis depends on His-78, which acts as the Proton donor. Residue 145 to 146 coordinates coenzyme F420-(gamma-Glu)n; sequence TG. Glu-147 functions as the Proton acceptor in the catalytic mechanism. Coenzyme F420-(gamma-Glu)n-binding positions include Asn-150 and 213–214; that span reads SG.

Belongs to the F420-dependent hydroxymycolic acid dehydrogenase family. As to quaternary structure, homodimer. Post-translationally, is exported by the Tat system. The position of the signal peptide cleavage has not been experimentally proven. In terms of processing, may be lipidated.

Its subcellular location is the cell envelope. It functions in the pathway lipid metabolism; mycolic acid biosynthesis. Its activity is regulated as follows. Is inhibited by the anti-tuberculous drug PA-824, a bicyclic 4-nitroimidazole class compound. Therefore, this is consistent with the finding that PA-824 inhibits the formation of K-MAs and causes an accumulation of hydroxymycolic acids (H-MAs) in M.tuberculosis. Its function is as follows. Catalyzes the coenzyme F420-dependent oxidation of hydroxymycolic acids (H-MAs) to ketomycolic acids (K-MAs), a lipid class making up the mycobacterial pseudo-outer membrane and over one-third of the dry weight of M.tuberculosis. Does not exhibit F420-dependent glucose-6-phosphate dehydrogenase (FGD) activity. This chain is F420-dependent hydroxymycolic acid dehydrogenase, found in Mycobacterium tuberculosis (strain ATCC 25618 / H37Rv).